The primary structure comprises 305 residues: Heme A synthase (305 aa).

At 1–6 the chain is on the cytoplasmic side; it reads MKKFLK. The helical transmembrane segment at 7–27 threads the bilayer; the sequence is VWSVLTIICMTVVVFGGALVT. Topologically, residues 28–63 are extracellular; sequence KTGSADGCGNSWPLCNGQLVRLTDVTPEKLIEFMHR. Residues C35 and C42 are joined by a disulfide bond. Residue E59 is part of the active site. Heme o is bound at residue H62. Residues 64–84 traverse the membrane as a helical segment; it reads MTTGISSIFVIVLAICAWIYM. The Cytoplasmic portion of the chain corresponds to 85–92; it reads KNRRETKP. The chain crosses the membrane as a helical span at residues 93 to 113; the sequence is LAIIAVLFLIIQALMGMAAVV. Topologically, residues 114 to 122 are extracellular; the sequence is WGQNPYIMA. A helical membrane pass occupies residues 123 to 143; it reads LHFGISIICYASIVLLALMIF. H124 lines the heme o pocket. Residues 144–160 lie on the Cytoplasmic side of the membrane; it reads EVDRKFDARNLVMGTKL. A helical membrane pass occupies residues 161-181; sequence RINIYALTIYTYLAVYTGALV. Topologically, residues 182-212 are extracellular; sequence RHEKASMAVPVWPFENGHFIMPTSVQDYVQY. The helical transmembrane segment at 213–233 threads the bilayer; sequence FHRLAAFILIVWLLYVTWLVF. H214 is a heme b binding site. At 234–240 the chain is on the cytoplasmic side; sequence RDYRRYR. Residues 241-261 traverse the membrane as a helical segment; sequence VLTFSMVLSLVFIALQAVTGA. Over 262–271 the chain is Extracellular; sequence LSVYTGVNLY. The chain crosses the membrane as a helical span at residues 272–292; it reads IALAHSLIITMLFALLCYLCL. H276 contributes to the heme b binding site. The Cytoplasmic segment spans residues 293–305; it reads LASRSKSNRLRIK.

This sequence belongs to the COX15/CtaA family. Type 1 subfamily. As to quaternary structure, interacts with CtaB. Heme b is required as a cofactor.

Its subcellular location is the cell membrane. It carries out the reaction Fe(II)-heme o + 2 A + H2O = Fe(II)-heme a + 2 AH2. Its pathway is porphyrin-containing compound metabolism; heme A biosynthesis; heme A from heme O: step 1/1. Catalyzes the conversion of heme O to heme A by two successive hydroxylations of the methyl group at C8. The first hydroxylation forms heme I, the second hydroxylation results in an unstable dihydroxymethyl group, which spontaneously dehydrates, resulting in the formyl group of heme A. In Listeria monocytogenes serotype 4b (strain F2365), this protein is Heme A synthase.